Reading from the N-terminus, the 65-residue chain is Large ribosomal subunit protein bL35 (65 aa).

Positions 1–26 are disordered; that stretch reads MPKIKTVRGAAKRFKKTASGGFKRKQ. The segment covering 10 to 26 has biased composition (basic residues); the sequence is AAKRFKKTASGGFKRKQ.

This sequence belongs to the bacterial ribosomal protein bL35 family.

This chain is Large ribosomal subunit protein bL35, found in Actinobacillus succinogenes (strain ATCC 55618 / DSM 22257 / CCUG 43843 / 130Z).